Reading from the N-terminus, the 263-residue chain is Probable ribosomal RNA small subunit methyltransferase A (263 aa).

S-adenosyl-L-methionine contacts are provided by Leu12, Gly37, Glu58, Asp83, and Asn100.

Belongs to the class I-like SAM-binding methyltransferase superfamily. rRNA adenine N(6)-methyltransferase family. RsmA subfamily.

Its subcellular location is the cytoplasm. Its function is as follows. Specifically dimethylates two adjacent adenosines in the loop of a conserved hairpin near the 3'-end of 16S rRNA in the 30S particle. May play a critical role in biogenesis of 30S subunits. The protein is Probable ribosomal RNA small subunit methyltransferase A of Methanococcus maripaludis (strain C7 / ATCC BAA-1331).